Here is a 646-residue protein sequence, read N- to C-terminus: Threonine--tRNA ligase (646 aa).

A TGS domain is found at 1–61; that stretch reads MIKITFPDGN…NEDSNFEIVT (61 aa). The interval 242–540 is catalytic; that stretch reads DHRKLGRELD…LIEVYKGAFP (299 aa). Cys-336, His-387, and His-517 together coordinate Zn(2+).

It belongs to the class-II aminoacyl-tRNA synthetase family. Homodimer. It depends on Zn(2+) as a cofactor.

The protein localises to the cytoplasm. The catalysed reaction is tRNA(Thr) + L-threonine + ATP = L-threonyl-tRNA(Thr) + AMP + diphosphate + H(+). Its function is as follows. Catalyzes the attachment of threonine to tRNA(Thr) in a two-step reaction: L-threonine is first activated by ATP to form Thr-AMP and then transferred to the acceptor end of tRNA(Thr). Also edits incorrectly charged L-seryl-tRNA(Thr). This chain is Threonine--tRNA ligase, found in Lactococcus lactis subsp. lactis (strain IL1403) (Streptococcus lactis).